The sequence spans 352 residues: Mitochondrial ubiquitin ligase activator of NFKB 1 (352 aa).

Residues 1–8 lie on the Cytoplasmic side of the membrane; that stretch reads MESGSRPS. The helical transmembrane segment at 9–29 threads the bilayer; sequence LGQVILLGTSSMVTAVLYSIY. Residues 30–238 are Mitochondrial intermembrane-facing; sequence RQKAQVAQEL…LLHRQESSVR (209 aa). Lys-52 is covalently cross-linked (Glycyl lysine isopeptide (Lys-Gly) (interchain with G-Cter in ubiquitin)). Residues 239–259 form a helical membrane-spanning segment; sequence LWKILVLVFGFATCATLFFIL. Topologically, residues 260–352 are cytoplasmic; sequence RKQYLHRQER…ITRVIPLYNS (93 aa). A Glycyl lysine isopeptide (Lys-Gly) (interchain with G-Cter in ubiquitin) cross-link involves residue Lys-299. The segment at 302–340 adopts an RING-type zinc-finger fold; it reads CVVCLSNFKSCVFLECGHVCSCRQCYLALPEPKRCPICR.

Homooligomer. Interacts with MAP3K7/TAK1. Interacts with UBC9. Interacts with and sumoylates DNM1L. Interacts with MAVS. Interacts with TP53 (via N-terminus); the interaction leads to ubiquitination and proteasomal degradation of TP53. In terms of processing, ubiquitinated by PRKN during mitophagy, leading to its degradation and enhancement of mitophagy. Deubiquitinated by USP30. As to expression, expressed in cortical neurons (at protein level).

It is found in the mitochondrion outer membrane. The protein localises to the peroxisome. It carries out the reaction S-ubiquitinyl-[E2 ubiquitin-conjugating enzyme]-L-cysteine + [acceptor protein]-L-lysine = [E2 ubiquitin-conjugating enzyme]-L-cysteine + N(6)-ubiquitinyl-[acceptor protein]-L-lysine.. The protein operates within protein modification; protein ubiquitination. It functions in the pathway protein modification; protein sumoylation. In terms of biological role, exhibits weak E3 ubiquitin-protein ligase activity. E3 ubiquitin ligases accept ubiquitin from an E2 ubiquitin-conjugating enzyme in the form of a thioester and then directly transfer the ubiquitin to targeted substrates. Can ubiquitinate AKT1 preferentially at 'Lys-284' involving 'Lys-48'-linked polyubiquitination and seems to be involved in regulation of Akt signaling by targeting phosphorylated Akt to proteasomal degradation. Mediates polyubiquitination of cytoplasmic TP53 at 'Lys-27' which targets TP53 for proteasomal degradation, thus reducing TP53 levels in the cytoplasm and mitochondrion. Proposed to preferentially act as a SUMO E3 ligase at physiological concentrations. Plays a role in the control of mitochondrial morphology by promoting mitochondrial fragmentation, and influences mitochondrial localization. Likely to promote mitochondrial fission through negatively regulating the mitochondrial fusion proteins MFN1 and MFN2, acting in a pathway that is parallel to the PRKN/PINK1 regulatory pathway. May also be involved in the sumoylation of the membrane fission protein DNM1L. Inhibits cell growth. When overexpressed, activates JNK through MAP3K7/TAK1 and induces caspase-dependent apoptosis. Involved in the modulation of innate immune defense against viruses by inhibiting RIGI-dependent antiviral response. Can mediate RIGI sumoylation and disrupt its polyubiquitination. The sequence is that of Mitochondrial ubiquitin ligase activator of NFKB 1 (Mul1) from Mus musculus (Mouse).